The sequence spans 169 residues: CKLF-like MARVEL transmembrane domain-containing protein 2A (169 aa).

4 helical membrane passes run 40-60 (FWLS…ISAL), 69-89 (HPVL…FIFL), 98-118 (IPFV…CVFL), and 136-156 (YLTA…DMLL). In terms of domain architecture, MARVEL spans 40–162 (FWLSGHAVFK…DMLLQFQHFR (123 aa)).

Belongs to the chemokine-like factor family.

The protein localises to the membrane. This chain is CKLF-like MARVEL transmembrane domain-containing protein 2A (Cmtm2a), found in Mus musculus (Mouse).